The following is a 654-amino-acid chain: DNA ligase (654 aa).

NAD(+)-binding positions include aspartate 37–aspartate 41, serine 86–methionine 87, and glutamate 113. Lysine 115 functions as the N6-AMP-lysine intermediate in the catalytic mechanism. Residues arginine 136, glutamate 170, and lysine 308 each contribute to the NAD(+) site. Zn(2+)-binding residues include cysteine 402, cysteine 405, cysteine 418, and cysteine 423. Residues isoleucine 576–isoleucine 654 enclose the BRCT domain.

It belongs to the NAD-dependent DNA ligase family. LigA subfamily. It depends on Mg(2+) as a cofactor. Mn(2+) is required as a cofactor.

The catalysed reaction is NAD(+) + (deoxyribonucleotide)n-3'-hydroxyl + 5'-phospho-(deoxyribonucleotide)m = (deoxyribonucleotide)n+m + AMP + beta-nicotinamide D-nucleotide.. Its function is as follows. DNA ligase that catalyzes the formation of phosphodiester linkages between 5'-phosphoryl and 3'-hydroxyl groups in double-stranded DNA using NAD as a coenzyme and as the energy source for the reaction. It is essential for DNA replication and repair of damaged DNA. This Campylobacter curvus (strain 525.92) protein is DNA ligase.